Reading from the N-terminus, the 659-residue chain is Anoctamin-10 (659 aa).

At 1 to 207 the chain is on the cytoplasmic side; that stretch reads MRVTLSTLDT…DSIRSYFGET (207 aa). The helical transmembrane segment at 208–228 threads the bilayer; that stretch reads IALYFGFLEYFTFALIPMAII. Residues 229–240 are Extracellular-facing; it reads GLPYYLFVWEDY. The helical transmembrane segment at 241 to 261 threads the bilayer; it reads DKYVIFASFNLIWSTVILEVW. Topologically, residues 262 to 316 are cytoplasmic; that stretch reads KRGCANMTYRWGTLVMKRQFEEPRPGFHGVLGINSVTGREEPLYSSYKRQLRIYL. The helical transmembrane segment at 317-337 threads the bilayer; it reads VSLPFVCLCLYFSLYVMMIYF. At 338–352 the chain is on the extracellular side; that stretch reads DMEDWALSLHEDSGS. A helical membrane pass occupies residues 353 to 373; that stretch reads EWTSLLLYVPSIVYAVVIEIM. Residues 374–400 are Cytoplasmic-facing; the sequence is NRLYRYAAEFLTSWENHRLESAYQNHL. A helical membrane pass occupies residues 401–421; the sequence is VLKVLVFNFLNCFASLFYIAF. The Extracellular segment spans residues 422–500; it reads VLKDMKLLRQ…YLGTFDDYLE (79 aa). A helical membrane pass occupies residues 501 to 521; sequence LFLQFGYVSLFSCVYPLAAAF. The Cytoplasmic segment spans residues 522 to 553; sequence AVLNNFTEVNSDALKMCRVFKRPFAEPSASIG. The helical transmembrane segment at 554–574 threads the bilayer; the sequence is VWQLAFETMSVISVVTNCALI. The Extracellular portion of the chain corresponds to 575–590; the sequence is GMSPQVNAVFPESKTD. A helical membrane pass occupies residues 591–611; sequence LVLIVVAVEHALLALKFILAF. The Cytoplasmic segment spans residues 612–659; sequence AIPDKPRHIQQKLARLEFESLEALKQQQMKLVAENLKEEYQEDGKEAT.

This sequence belongs to the anoctamin family. Predominant expression seen in epithelial tissues.

Its subcellular location is the cell membrane. Functionally, does not exhibit calcium-activated chloride channel (CaCC) activity. Can inhibit the activity of ANO1. The polypeptide is Anoctamin-10 (Ano10) (Mus musculus (Mouse)).